A 567-amino-acid chain; its full sequence is Nucleolus and neural progenitor protein (567 aa).

Ser-265 carries the post-translational modification Phosphoserine. The interval Ser-437 to Pro-457 is disordered. Positions Arg-442–Lys-460 are nuclear localization signal.

Belongs to the nepro family.

It localises to the nucleus. Its subcellular location is the nucleolus. In terms of biological role, may play a role in cortex development as part of the Notch signaling pathway. Downstream of Notch may repress the expression of proneural genes and inhibit neuronal differentiation thereby maintaining neural progenitors. May also play a role in preimplentation embryo development. The polypeptide is Nucleolus and neural progenitor protein (Homo sapiens (Human)).